Consider the following 829-residue polypeptide: Protein roadkill (829 aa).

Composition is skewed to low complexity over residues 24–36, 122–140, and 266–288; these read EQQQ…QQQQ, TPAA…QAAP, and SSSS…SSSS. 4 disordered regions span residues 24–47, 106–142, 266–296, and 313–400; these read EQQQ…CCEN, SSLQ…APSV, SSSS…SHHS, and HLNQ…NQQQ. Residues 313–322 are compositionally biased toward basic residues; sequence HLNQQQHHHP. Composition is skewed to low complexity over residues 323-353, 372-382, and 389-400; these read LSAS…QQQH, SSSSSSSSSSS, and SSSSSNSNNQQQ. In terms of domain architecture, MATH spans 486-616; the sequence is KFSYMWTINN…EDKLTIFCEV (131 aa). The 68-residue stretch at 655 to 722 folds into the BTB domain; that stretch reads SDVTLSVGGR…IYTGKAPNLE (68 aa).

Belongs to the Tdpoz family. Interacts with ci and gft/CUL3. As to expression, expressed near the anterio-posterior compartment boundary of antenna, leg and wing disks.

The protein resides in the nucleus. It participates in protein modification; protein ubiquitination. Its function is as follows. Involved in segment polarity. In complex with gft/CUL3, promotes ubiquitination of ci and its subsequent degradation by the proteasome, which results in hh signaling attenuation. This regulation may be important during eye formation for proper packing of ommatidia into a hexagonal array. This Drosophila melanogaster (Fruit fly) protein is Protein roadkill (rdx).